The chain runs to 519 residues: NADH-quinone oxidoreductase subunit N (519 aa).

14 helical membrane-spanning segments follow: residues 22–42, 53–73, 87–107, 141–161, 163–183, 198–218, 242–262, 287–307, 310–330, 336–356, 363–383, 406–426, 442–461, and 483–503; these read LLPM…EAFV, VLAL…TGLP, PTLF…LLIA, TEVF…PAAN, LITA…LAGM, YFLL…LVYG, IIVG…GVPF, VAAF…LAWD, PVIW…GITQ, LLAY…AATT, VLFY…IVIL, LVAG…PTSG, AGPL…YYYL, and GALA…LGIV.

This sequence belongs to the complex I subunit 2 family. In terms of assembly, NDH-1 is composed of 14 different subunits. Subunits NuoA, H, J, K, L, M, N constitute the membrane sector of the complex.

It localises to the cell membrane. It catalyses the reaction a quinone + NADH + 5 H(+)(in) = a quinol + NAD(+) + 4 H(+)(out). Its function is as follows. NDH-1 shuttles electrons from NADH, via FMN and iron-sulfur (Fe-S) centers, to quinones in the respiratory chain. The immediate electron acceptor for the enzyme in this species is believed to be a menaquinone. Couples the redox reaction to proton translocation (for every two electrons transferred, four hydrogen ions are translocated across the cytoplasmic membrane), and thus conserves the redox energy in a proton gradient. In Acidothermus cellulolyticus (strain ATCC 43068 / DSM 8971 / 11B), this protein is NADH-quinone oxidoreductase subunit N.